We begin with the raw amino-acid sequence, 355 residues long: NAD-dependent protein deacylase sirtuin-6 (355 aa).

At Ser-2 the chain carries N-acetylserine. Residue Ser-10 is modified to Phosphoserine; by MAPK8. In terms of domain architecture, Deacetylase sirtuin-type spans 27 to 272; it reads PEELERKVWE…TRLMKHLGLE (246 aa). Residue Lys-33 is modified to N6-acetyllysine. Residues Ala-53, Thr-57, Phe-64, Arg-65, Trp-71, Gln-113, and His-133 each coordinate NAD(+). Residue His-133 is the Proton acceptor of the active site. Residues Cys-141, Cys-144, and Cys-166 each coordinate Zn(2+). A Glycyl lysine isopeptide (Lys-Gly) (interchain with G-Cter in ubiquitin) cross-link involves residue Lys-170. Residue Cys-177 participates in Zn(2+) binding. NAD(+) is bound by residues Gly-214, Ser-216, Asn-240, Gln-242, and Val-258. The disordered stretch occupies residues 284–355; that stretch reads RALPPLPRPP…KRVKAKAVPS (72 aa). Residues 287 to 296 are compositionally biased toward pro residues; that stretch reads PPLPRPPTPK. Thr-294 bears the Phosphothreonine mark. 2 positions are modified to phosphoserine: Ser-303 and Ser-330. Residues 343–355 are compositionally biased toward basic residues; that stretch reads RPPKRVKAKAVPS.

The protein belongs to the sirtuin family. Class IV subfamily. As to quaternary structure, homodimer; binds to nucleosomes and DNA ends as a homodimer. Interacts with RELA; interferes with RELA binding to target DNA. Interacts with SMARCA5; promoting recruitment of SMARCA5/SNF2H to double-strand breaks (DSBs) sites. Interacts with the mTORC2 complex; preventing the ability of SIRT6 to deacetylate FOXO1. Interacts with the CLOCK-BMAL1 complex; recruited by the CLOCK-BMAL1 complex to regulate expression of clock-controlled genes. Interacts with CSNK2A2; preventing CSNK2A2 localization to the nucleus. In terms of assembly, (Microbial infection) Interacts with Kaposi's sarcoma-associated herpesvirus protein VIRF-1; this interaction prevents SIRT6 deubiquitination by USP10. The cofactor is Zn(2+). In terms of processing, acetylated at Lys-33. Deacetylation at Lys-33 by SIRT1 promotes homomultimerization and binding to double-strand breaks (DSBs) sites. Post-translationally, phosphorylation at Ser-10 by MAPK8/JNK1 in response to oxidative stress stimulates the mono-ADP-ribosyltransferase activity on PARP1, leading to PARP1 recruitment to double-strand breaks (DSBs). Monoubiquitinated at Lys-170 by STUB1/CHIP, preventing its degradation by the proteasome. Deubiquitinated by USP10, also preventing its degradation by the proteasome. In terms of processing, sumoylated, leading to specifically decrease ability to deacetylate histone H3 at 'Lys-56' (H3K56ac).

It is found in the nucleus. Its subcellular location is the chromosome. It localises to the telomere. The protein resides in the endoplasmic reticulum. It carries out the reaction N(6)-acetyl-L-lysyl-[protein] + NAD(+) + H2O = 2''-O-acetyl-ADP-D-ribose + nicotinamide + L-lysyl-[protein]. The catalysed reaction is N(6)-tetradecanoyl-L-lysyl-[protein] + NAD(+) + H2O = 2''-O-tetradecanoyl-ADP-D-ribose + nicotinamide + L-lysyl-[protein]. It catalyses the reaction N(6)-hexadecanoyl-L-lysyl-[protein] + NAD(+) + H2O = 2''-O-hexadecanoyl-ADP-D-ribose + nicotinamide + L-lysyl-[protein]. The enzyme catalyses L-lysyl-[protein] + NAD(+) = N(6)-(ADP-D-ribosyl)-L-lysyl-[protein] + nicotinamide + H(+). It carries out the reaction L-arginyl-[protein] + NAD(+) = N(omega)-(ADP-D-ribosyl)-L-arginyl-[protein] + nicotinamide + H(+). With respect to regulation, compared to the defatty-acylase activity, the protein deacetylase activity is weak in vitro, and requires activation. The histone deacetylase activity is strongly activated upon binding to nucleosomes and chromatin in vivo. Two molecules of SIRT6 associate with the acidic patch of one nucleosome, while the C-terminal disordered region of SIRT6 associates with nucleosomal DNA, leading to efficient histone deacetylation. The protein-lysine deacetylase activity is also activated by long-chain free fatty-acids. The histone deacetylase activity is specifically repressed by long non-coding RNA lncPRESS1, which binds to SIRT6 and prevents chromatin-binding, thereby promoting stem cell pluripotency. Due to its essential role as tumor suppressor and involvement in DNA repair and life span, extensive research is made for the identification of small compound regulators of SIRT6. Nitro-fatty acids (nitro-oleic acid and nitro-conjugated linoleic acid) strongly stimulate the protein-lysine deacetylase activity by forming a covalent Michael adduct formation with Cys-18. Activated by UBCS039 (4-(pyridin-3-yl)-4,5- dihydropyrrolo[1,2-a]quinoxaline). Inhibited by non-selective hydroxamate trichostatin A inhibitor. Deacetylase activity is activated by fluvastatin and quercetin-based compounds. The protein-lysine deacetylase activity, but not the defatty-acylase activity, is specifically activated by MDL-800 and MDL-801 activators in vivo, enhancing the histone deacetylase and tumor suppressor activities. MDL-800 and MDL-801 selectively activate SIRT6 and not other members of the sirtuin family. The binding-mode of MDL-801 is however subject to discussion. Functionally, NAD-dependent protein deacetylase, deacylase and mono-ADP-ribosyltransferase that plays an essential role in DNA damage repair, telomere maintenance, metabolic homeostasis, inflammation, tumorigenesis and aging. Displays protein-lysine deacetylase or defatty-acylase (demyristoylase and depalmitoylase) activity, depending on the context. Acts as a key histone deacetylase by catalyzing deacetylation of histone H3 at 'Lys-9', 'Lys-18' and 'Lys-56' (H3K9ac, H3K18ac and H3K56ac, respectively), suppressing target gene expression of several transcription factors, including NF-kappa-B. Acts as an inhibitor of transcription elongation by mediating deacetylation of H3K9ac and H3K56ac, preventing release of NELFE from chromatin and causing transcriptional pausing. Involved in DNA repair by promoting double-strand break (DSB) repair: acts as a DSB sensor by recognizing and binding DSB sites, leading to (1) recruitment of DNA repair proteins, such as SMARCA5/SNF2H, and (2) deacetylation of histone H3K9ac and H3K56ac. SIRT6 participation to DSB repair is probably involved in extension of life span. Also promotes DNA repair by deacetylating non-histone proteins, such as DDB2 and p53/TP53. Specifically deacetylates H3K18ac at pericentric heterochromatin, thereby maintaining pericentric heterochromatin silencing at centromeres and protecting against genomic instability and cellular senescence. Involved in telomere maintenance by catalyzing deacetylation of histone H3 in telomeric chromatin, regulating telomere position effect and telomere movement in response to DNA damage. Required for embryonic stem cell differentiation by mediating histone deacetylation of H3K9ac. Plays a major role in metabolism by regulating processes such as glycolysis, gluconeogenesis, insulin secretion and lipid metabolism. Inhibits glycolysis via histone deacetylase activity and by acting as a corepressor of the transcription factor HIF1A, thereby controlling the expression of multiple glycolytic genes. Has tumor suppressor activity by repressing glycolysis, thereby inhibiting the Warburg effect. Also regulates glycolysis and tumorigenesis by mediating deacetylation and nuclear export of non-histone proteins, such as isoform M2 of PKM (PKM2). Acts as a negative regulator of gluconeogenesis by mediating deacetylation of non-histone proteins, such as FOXO1 and KAT2A/GCN5. Promotes beta-oxidation of fatty acids during fasting by catalyzing deacetylation of NCOA2, inducing coactivation of PPARA. Acts as a regulator of lipid catabolism in brown adipocytes, both by catalyzing deacetylation of histones and non-histone proteins, such as FOXO1. Also acts as a regulator of circadian rhythms, both by regulating expression of clock-controlled genes involved in lipid and carbohydrate metabolism, and by catalyzing deacetylation of PER2. The defatty-acylase activity is specifically involved in regulation of protein secretion. Has high activity toward long-chain fatty acyl groups and mediates protein-lysine demyristoylation and depalmitoylation of target proteins, such as RRAS2 and TNF, thereby regulating their secretion. Also acts as a mono-ADP-ribosyltransferase by mediating mono-ADP-ribosylation of PARP1, TRIM28/KAP1 or SMARCC2/BAF170. Mono-ADP-ribosyltransferase activity is involved in DNA repair, cellular senescence, repression of LINE-1 retrotransposon elements and regulation of transcription. The sequence is that of NAD-dependent protein deacylase sirtuin-6 from Homo sapiens (Human).